The sequence spans 207 residues: DNA protection during starvation protein 1 (207 aa).

Basic and acidic residues predominate over residues 1 to 12 (MTKKSTKSEAAS). A disordered region spans residues 1–31 (MTKKSTKSEAASKTKKSGVPETGAQGVRAGG). The Fe cation site is built by His-83, Asp-110, and Glu-114.

This sequence belongs to the Dps family. The 12 subunits form a hollow sphere into which the mineral iron core of up to 500 Fe(3+) can be deposited. The homododecameric forms at higher concentration of salt, the homodimeric form under reducing, low-salt conditions. The assembly of the dodecamer is irreversible.

The protein localises to the cytoplasm. It localises to the nucleoid. The enzyme catalyses 2 Fe(2+) + H2O2 + 2 H(+) = 2 Fe(3+) + 2 H2O. Its function is as follows. Protects DNA from oxidative damage by sequestering intracellular Fe(2+) ion and storing it in the form of Fe(3+) oxyhydroxide mineral. One hydrogen peroxide oxidizes two Fe(2+) ions, which prevents hydroxyl radical production by the Fenton reaction. Both oligomeric forms of dps exhibit ferroxidase activity and DNA binding. Dodecameric dps is capable of Fe(2+) oxidation/mineralization. Only dimeric dps affords efficient DNA protection against hydroxyl radical-mediated cleavage. This Deinococcus radiodurans (strain ATCC 13939 / DSM 20539 / JCM 16871 / CCUG 27074 / LMG 4051 / NBRC 15346 / NCIMB 9279 / VKM B-1422 / R1) protein is DNA protection during starvation protein 1 (dps1).